Reading from the N-terminus, the 690-residue chain is Sodium-dependent phosphate transport protein 2B (690 aa).

The disordered stretch occupies residues 1-42; it reads MAPWPELGDAQPNPDKYLEGAAGQQPTAPDKSKETNKTDNTE. The Cytoplasmic portion of the chain corresponds to 1–100; sequence MAPWPELGDA…ILCFFQGIGR (100 aa). Residues 30–40 are compositionally biased toward basic and acidic residues; it reads DKSKETNKTDN. The helical transmembrane segment at 101-121 threads the bilayer; the sequence is LILLLGFLYFFVCSLDILSSA. At 122-135 the chain is on the extracellular side; the sequence is FQLVGGKMAGQFFS. The helical transmembrane segment at 136–156 threads the bilayer; sequence NSSIMSNPLLGLVIGVLVTVL. The Cytoplasmic segment spans residues 157-212; it reads VQSSSTSTSIVVSMVSSSLLTVRAAIPIIMGANIGTSITNTIVALMQVGDRSEFRR. The helical transmembrane segment at 213 to 233 threads the bilayer; it reads AFAGATVHDFFNWLSVLVLLP. Residues 234–362 are Extracellular-facing; it reads VEVATHYLEI…IFVNFHLPDL (129 aa). N-linked (GlcNAc...) asparagine glycosylation is found at Asn-295, Asn-308, Asn-313, Asn-321, and Asn-340. The cysteines at positions 303 and 350 are disulfide-linked. The chain crosses the membrane as a helical span at residues 363 to 383; sequence AVGTILLILSLLVLCGCLIMI. Topologically, residues 384 to 407 are cytoplasmic; the sequence is VKILGSVLKGQVATVIKKTINTDF. The helical transmembrane segment at 408–428 threads the bilayer; sequence PFPFAWLTGYLAILVGAGMTF. Residues 429–485 lie on the Extracellular side of the membrane; the sequence is IVQSSSVFTSALTPLIGIGVITIERAYPLTLGSNIGTTTTAILAALASPGNALRSSL. A helical transmembrane segment spans residues 486-506; sequence QIALCHFFFNISGILLWYPIP. Over 507–525 the chain is Cytoplasmic; it reads FTRLPIRMAKGLGNISAKY. The chain crosses the membrane as a helical span at residues 526–546; that stretch reads RWFAVFYLIIFFFLIPLTVFG. Over 547-552 the chain is Extracellular; the sequence is LSLAGW. The helical transmembrane segment at 553–573 threads the bilayer; sequence RVLVGVGVPVVFIIILVLCLR. At 574 to 689 the chain is on the cytoplasmic side; the sequence is LLQSRCPRVL…ASDSKTECTA (116 aa).

The protein belongs to the SLC34A transporter family. As to expression, highly expressed in lung. Also detected in pancreas, kidney, small intestine, ovary, testis, prostate and mammary gland. In lung, it is found in alveolar type II cells but not in bronchiolar epithelium.

It is found in the apical cell membrane. The catalysed reaction is 3 Na(+)(out) + phosphate(out) = 3 Na(+)(in) + phosphate(in). In terms of biological role, involved in actively transporting phosphate into cells via Na(+) cotransport. The protein is Sodium-dependent phosphate transport protein 2B (SLC34A2) of Homo sapiens (Human).